The chain runs to 748 residues: Sulfhydryl oxidase 1 (748 aa).

The signal sequence occupies residues 1-32 (MRRCGRLSGPPSLLLLLLLLSPLLFSGPGAYA). A Thioredoxin domain is found at 33-159 (ARLSVLYSSS…RMRLIDALES (127 aa)). Catalysis depends on nucleophile residues Cys-73 and Cys-76. Intrachain disulfides connect Cys-73–Cys-76 and Cys-104–Cys-113. 2 N-linked (GlcNAc...) asparagine glycosylation sites follow: Asn-133 and Asn-246. Cys-396 and Cys-408 are disulfide-bonded. The region spanning 399–506 (SEPHFRGFPC…EDPHFPKVQW (108 aa)) is the ERV/ALR sulfhydryl oxidase domain. FAD contacts are provided by residues Arg-404, Trp-411, His-415, Asp-454, His-458, 481–488 (WTSHNRVN), Lys-503, and Trp-506. Residues Cys-452 and Cys-455 are joined by a disulfide bond. A disulfide bridge connects residues Cys-512 and Cys-515. Residues 581–647 (GHEQAASAES…QENAPGQQHL (67 aa)) are disordered. Positions 628–638 (ERMEDHQRDMQ) are enriched in basic and acidic residues. The chain crosses the membrane as a helical span at residues 711–731 (ISLCVGLYSVSFMGLLAMYTY).

This sequence belongs to the quiescin-sulfhydryl oxidase (QSOX) family. Monomer. It depends on FAD as a cofactor. Post-translationally, N-glycosylated. O-glycosylated on Thr and Ser residues. As to expression, detected in skin (at protein level). Expressed in the seminal vesicles and skin.

The protein localises to the golgi apparatus membrane. It is found in the secreted. The enzyme catalyses 2 R'C(R)SH + O2 = R'C(R)S-S(R)CR' + H2O2. Functionally, catalyzes the oxidation of sulfhydryl groups in peptide and protein thiols to disulfides with the reduction of oxygen to hydrogen peroxide. Plays a role in disulfide bond formation in a variety of extracellular proteins. In fibroblasts, required for normal incorporation of laminin into the extracellular matrix, and thereby for normal cell-cell adhesion and cell migration. This chain is Sulfhydryl oxidase 1 (Qsox1), found in Mus musculus (Mouse).